The following is a 246-amino-acid chain: MKLFLYHTPELTPTDKAPECAIAVDVLRATSTIATVLASGGEAVQVFSDLDRLIEVSEKWPHEKRLRAGERGGAKVAGFELGNSPLDCTPELVQGRRLFISTTNGTRALQRVQDSPNVLAAALINRAAVVQFLLDKQPETVWIVGSGWEGSFSLEDTVCAGAIAHSIWQQTQLSPEEIAGNDEVISAIALYSQWQDNLLGLLHQASHGQRLLRLDCHEDLKYCSQTDILDVLPIQHETGVLKSQKK.

It belongs to the ComB family. Requires Mg(2+) as cofactor.

It catalyses the reaction (2R)-O-phospho-3-sulfolactate + H2O = (2R)-3-sulfolactate + phosphate. This chain is Probable 2-phosphosulfolactate phosphatase, found in Nostoc punctiforme (strain ATCC 29133 / PCC 73102).